A 473-amino-acid polypeptide reads, in one-letter code: Protein TED1 (473 aa).

Topologically, residues 1–8 (MLRCAVKK) are cytoplasmic. Residues 9–29 (FAYFATFLTIVANIYIYTYPS) form a helical membrane-spanning segment. Over 30-451 (FHPEQCSWNC…FSLCPFAIQH (422 aa)) the chain is Lumenal. N-linked (GlcNAc...) asparagine glycans are attached at residues N38, N147, N229, N266, and N307. The helical transmembrane segment at 452-472 (VWWFAKVSLLVTIFTWSSLLF) threads the bilayer. Residue V473 is a topological domain, cytoplasmic.

N-glycosylated.

It localises to the endoplasmic reticulum membrane. Functionally, acts together with EMP24 and ERV25 in cargo exit from the endoplasmic reticulum. This chain is Protein TED1 (TED1), found in Saccharomyces cerevisiae (strain ATCC 204508 / S288c) (Baker's yeast).